Consider the following 188-residue polypeptide: UPF0232 protein RHA1_ro03670 (188 aa).

3 disordered regions span residues 1 to 20 (MTDD…PEVK), 31 to 78 (EARA…QPFG), and 166 to 188 (PTAP…DTYG). A compositionally biased stretch (low complexity) spans 7 to 16 (PTAPAAAAPE).

It belongs to the UPF0232 family.

The sequence is that of UPF0232 protein RHA1_ro03670 from Rhodococcus jostii (strain RHA1).